Consider the following 646-residue polypeptide: Leukotriene A-4 hydrolase homolog (646 aa).

A peptide-binding positions include 172 to 174 (QCQ) and 307 to 312 (PYGGME). Zn(2+) is bound at residue histidine 336. The active-site Proton acceptor is the glutamate 337. Residues histidine 340 and glutamate 359 each contribute to the Zn(2+) site. The Proton donor role is filled by tyrosine 424.

This sequence belongs to the peptidase M1 family. Zn(2+) serves as cofactor.

The protein resides in the cytoplasm. It is found in the nucleus. The enzyme catalyses leukotriene A4 + H2O = leukotriene B4. It participates in lipid metabolism; leukotriene B4 biosynthesis. Aminopeptidase that preferentially cleaves tripeptides. Also has low epoxide hydrolase activity (in vitro). Can hydrolyze an epoxide moiety of LTA(4) to form LTB(4) (in vitro). This chain is Leukotriene A-4 hydrolase homolog, found in Botryotinia fuckeliana (strain B05.10) (Noble rot fungus).